The primary structure comprises 134 residues: uncharacterized protein (134 aa).

3 helical membrane-spanning segments follow: residues 5-25, 30-50, and 62-82; these read FGIFSFLAVSVSAAGFFFGGF, LILLSLMAIEFISTTLKETII, and LVKKLVTLALISVCHFFDQLL.

The protein belongs to the bacteriophage holin family. Cp-1 holin subfamily.

The protein localises to the cell membrane. This is an uncharacterized protein from Bacillus subtilis (strain 168).